The following is a 264-amino-acid chain: Acyl-[acyl-carrier-protein]--UDP-N-acetylglucosamine O-acyltransferase (264 aa).

This sequence belongs to the transferase hexapeptide repeat family. LpxA subfamily. As to quaternary structure, homotrimer.

Its subcellular location is the cytoplasm. The catalysed reaction is a (3R)-hydroxyacyl-[ACP] + UDP-N-acetyl-alpha-D-glucosamine = a UDP-3-O-[(3R)-3-hydroxyacyl]-N-acetyl-alpha-D-glucosamine + holo-[ACP]. Its pathway is glycolipid biosynthesis; lipid IV(A) biosynthesis; lipid IV(A) from (3R)-3-hydroxytetradecanoyl-[acyl-carrier-protein] and UDP-N-acetyl-alpha-D-glucosamine: step 1/6. In terms of biological role, involved in the biosynthesis of lipid A, a phosphorylated glycolipid that anchors the lipopolysaccharide to the outer membrane of the cell. In Rickettsia prowazekii (strain Madrid E), this protein is Acyl-[acyl-carrier-protein]--UDP-N-acetylglucosamine O-acyltransferase.